The sequence spans 316 residues: Pantothenate kinase (316 aa).

Gly95 to Ser102 provides a ligand contact to ATP.

It belongs to the prokaryotic pantothenate kinase family.

It localises to the cytoplasm. The enzyme catalyses (R)-pantothenate + ATP = (R)-4'-phosphopantothenate + ADP + H(+). Its pathway is cofactor biosynthesis; coenzyme A biosynthesis; CoA from (R)-pantothenate: step 1/5. In Shewanella oneidensis (strain ATCC 700550 / JCM 31522 / CIP 106686 / LMG 19005 / NCIMB 14063 / MR-1), this protein is Pantothenate kinase.